We begin with the raw amino-acid sequence, 213 residues long: UPF0301 protein RPC_0788 (213 aa).

The segment at 1–20 is disordered; the sequence is MDPKSKAPKRDETKGADDAS.

This sequence belongs to the UPF0301 (AlgH) family.

This Rhodopseudomonas palustris (strain BisB18) protein is UPF0301 protein RPC_0788.